The following is a 173-amino-acid chain: Probable transcription termination protein NusA (173 aa).

A KH domain is found at 31 to 97; the sequence is DEKIVFVVKE…EDVWVKKFGN (67 aa). A compositionally biased stretch (basic and acidic residues) spans 147 to 162; the sequence is ADNRPKKDEIPEKAAE. Residues 147-173 form a disordered region; the sequence is ADNRPKKDEIPEKAAESSENVQAEENQ. Positions 163-173 are enriched in polar residues; it reads SSENVQAEENQ.

Belongs to the NusA family.

The protein localises to the cytoplasm. Its function is as follows. Participates in transcription termination. This Methanococcus vannielii (strain ATCC 35089 / DSM 1224 / JCM 13029 / OCM 148 / SB) protein is Probable transcription termination protein NusA.